A 50-amino-acid polypeptide reads, in one-letter code: MARYRRCRSQSRSRCCRPRRRCRRRRRSCRARRRATRCCRRRYRLRCRRY.

It belongs to the protamine P1 family. In terms of tissue distribution, testis.

The protein resides in the nucleus. The protein localises to the chromosome. Its function is as follows. Protamines substitute for histones in the chromatin of sperm during the haploid phase of spermatogenesis. They compact sperm DNA into a highly condensed, stable and inactive complex. This Trachypithecus vetulus (Purple-faced langur) protein is Sperm protamine P1 (PRM1).